The chain runs to 979 residues: Ankycorbin (979 aa).

N-acetylmethionine is present on methionine 1. Serine 11 carries the post-translational modification Phosphoserine. 7 ANK repeats span residues 18-51 (KNDD…KHDS), 52-81 (EGKT…DVTA), 85-114 (SGHS…PAEN), 118-147 (SGKT…PINL), 151-180 (DGNI…DVNS), 184-213 (NGRT…DLSL), and 217-247 (LGHN…DADL). Over residues 247-259 (LKTPTKPKQHDQV) the composition is skewed to basic and acidic residues. A disordered region spans residues 247–299 (LKTPTKPKQHDQVSKISSERSGTPKKRKAPPPPISPTQLSDVSSPRSITSTPL). Phosphothreonine is present on threonine 249. The short motif at 270–276 (PKKRKAP) is the Nuclear localization signal element. Residues serine 281, serine 286, and serine 293 each carry the phosphoserine modification. Positions 282 to 299 (PTQLSDVSSPRSITSTPL) are enriched in polar residues. Phosphothreonine is present on residues threonine 295 and threonine 297. Phosphoserine occurs at positions 300, 304, 318, 327, 329, 340, 341, and 358. Residues 349–374 (LVLLQAKVASLTLHNKELQDKLQAKS) adopt a coiled-coil conformation. Disordered stretches follow at residues 392–429 (TQTD…TDND) and 446–467 (LESS…RTDT). A coiled-coil region spans residues 430–943 (VIIRQLQDSL…CKKHHQEVIS (514 aa)). Residues 446 to 457 (LESSEAEKKQLQ) are compositionally biased toward basic and acidic residues. Positions 458–467 (DELQSQRTDT) are enriched in polar residues. Phosphoserine is present on residues serine 513, serine 516, serine 667, serine 694, and serine 914.

Interacts with PALLD. Associates with actin. However, does not bind F-actin directly. Highly expressed in testis, where it localizes to seminiferous tubules (at protein level). Expressed in ganglion cell layer and in Muller cell fibers of the retina (at protein level). In small intestine highly expressed at the apical and lateral borders of absorptive epithelia (at protein level). In liver highly expressed along the bile canaliculi (at protein level).

Its subcellular location is the cytoplasm. It is found in the cytoskeleton. It localises to the stress fiber. The protein localises to the cell cortex. The protein resides in the cell junction. Its subcellular location is the nucleus. Functionally, plays a role in actin regulation at the ectoplasmic specialization, a type of cell junction specific to testis. Important for establishment of sperm polarity and normal spermatid adhesion. May also promote integrity of Sertoli cell tight junctions at the blood-testis barrier. The sequence is that of Ankycorbin (Rai14) from Mus musculus (Mouse).